Consider the following 51-residue polypeptide: Nawaprin (51 aa).

One can recognise a WAP domain in the interval 1-50; the sequence is NEKSGSCPDMSMPIPPLGICKTLCNSDSGCPNVQKCCKNGCGFMTCTTPV. Disulfide bonds link Cys-7–Cys-37, Cys-20–Cys-41, Cys-24–Cys-36, and Cys-30–Cys-46.

In terms of tissue distribution, expressed by the venom gland.

It is found in the secreted. Damages membranes of susceptible bacteria. Has no hemolytic activity. Not toxic to mice. Does not inhibit the proteinases elastase and cathepsin G. This Naja nigricollis (Black-necked spitting cobra) protein is Nawaprin.